The sequence spans 137 residues: Envelope glycoprotein L (137 aa).

An N-terminal signal peptide occupies residues 1–22 (MRAVGVFLAICLVTIFVLPTWG). An interaction with gH region spans residues 23-128 (NWAYPCCHVT…SVEDLFGANL (106 aa)). 2 disulfides stabilise this stretch: cysteine 28/cysteine 56 and cysteine 29/cysteine 79.

This sequence belongs to the herpesviridae glycoprotein L family. As to quaternary structure, interacts with glycoprotein H (gH); this interaction is necessary for the correct processing and cell surface expression of gH. The heterodimer gH/gL seems to interact with gB trimers during fusion. The heterodimer gH/gL interacts with host EPHA2 to facilitate virus internalization and fusion.

Its subcellular location is the virion membrane. The protein localises to the host cell membrane. The protein resides in the host Golgi apparatus. It is found in the host trans-Golgi network. In terms of biological role, the heterodimer glycoprotein H-glycoprotein L is required for the fusion of viral and plasma membranes leading to virus entry into the host cell. Acts as a functional inhibitor of gH and maintains gH in an inhibited form. Upon binding to host integrins, gL dissociates from gH leading to activation of the viral fusion glycoproteins gB and gH. Fusion of EBV with B-lymphocytes requires the additional receptor-binding protein gp42, which forms a complex with gH/gL. The heterodimer gH/gL targets also host EPHA2 to promote viral entry. This Homo sapiens (Human) protein is Envelope glycoprotein L.